The chain runs to 132 residues: Glycine cleavage system H protein (132 aa).

The Lipoyl-binding domain occupies 27–109; sequence FATIGISAFA…FDFGWILKVK (83 aa). Residue Lys-68 is modified to N6-lipoyllysine.

Belongs to the GcvH family. In terms of assembly, the glycine cleavage system is composed of four proteins: P, T, L and H. (R)-lipoate serves as cofactor.

Its function is as follows. The glycine cleavage system catalyzes the degradation of glycine. The H protein shuttles the methylamine group of glycine from the P protein to the T protein. This is Glycine cleavage system H protein from Rhodopirellula baltica (strain DSM 10527 / NCIMB 13988 / SH1).